The chain runs to 228 residues: UPF0758 protein H16_A3033 (228 aa).

One can recognise an MPN domain in the interval 102 to 224; it reads GFDGPAAVRN…IRSLADCCDR (123 aa). The Zn(2+) site is built by His-173, His-175, and Asp-186. The JAMM motif signature appears at 173–186; that stretch reads HNHPRGTTAPSQSD.

The protein belongs to the UPF0758 family.

This chain is UPF0758 protein H16_A3033, found in Cupriavidus necator (strain ATCC 17699 / DSM 428 / KCTC 22496 / NCIMB 10442 / H16 / Stanier 337) (Ralstonia eutropha).